A 280-amino-acid polypeptide reads, in one-letter code: Putative aquaporin-10 (280 aa).

The Cytoplasmic segment spans residues 1–8; it reads MEAVSSEY. The chain crosses the membrane as a helical span at residues 9–29; sequence YFPLYSALGYFALVFGIGEIA. Topologically, residues 30-64 are extracellular; the sequence is RIITAKYVSPRGNSQLFLYELIGTIQMCTCVYENG. A helical membrane pass occupies residues 65–85; sequence IIFKNYGFPAIFICVALLLTA. Over 86 to 114 the chain is Cytoplasmic; the sequence is GNIFNRGAMTNCAPIFEQFVFGNLGSSKF. The helical transmembrane segment at 115–135 threads the bilayer; the sequence is LTILSAQLIGATFASKFAYLI. Residues 136–164 are Extracellular-facing; the sequence is WNITAPYSTAHLENASNLECILHYKQTAG. The chain crosses the membrane as a helical span at residues 165–185; the sequence is IVIGFEIVGAFVVRIVVAQLL. Over 186–193 the chain is Cytoplasmic; the sequence is ARPALIKL. The helical transmembrane segment at 194–214 threads the bilayer; the sequence is IPFAISAYLSLALYVVGVPGL. The Extracellular segment spans residues 215-233; it reads NPIVATARLYGCRGIDNSS. The helical transmembrane segment at 234–254 threads the bilayer; it reads FFILYWFCPVLGWLTGAYVVG. Residues 255–280 lie on the Cytoplasmic side of the membrane; that stretch reads QKSPSKKSAKDVKAEKKAKAAAKKSD. Positions 256–280 are disordered; it reads KSPSKKSAKDVKAEKKAKAAAKKSD. Positions 262–280 are enriched in basic and acidic residues; sequence SAKDVKAEKKAKAAAKKSD.

It belongs to the MIP/aquaporin (TC 1.A.8) family.

The protein localises to the membrane. The chain is Putative aquaporin-10 (aqp-10) from Caenorhabditis elegans.